Here is an 89-residue protein sequence, read N- to C-terminus: Small ribosomal subunit protein bS20 (89 aa).

The segment at 1–20 (MANHKSAEKRARQTIKRTER) is disordered.

This sequence belongs to the bacterial ribosomal protein bS20 family.

Its function is as follows. Binds directly to 16S ribosomal RNA. This Campylobacter curvus (strain 525.92) protein is Small ribosomal subunit protein bS20.